The sequence spans 276 residues: Pyrroline-5-carboxylate reductase (276 aa).

It belongs to the pyrroline-5-carboxylate reductase family.

The protein localises to the cytoplasm. It catalyses the reaction L-proline + NADP(+) = (S)-1-pyrroline-5-carboxylate + NADPH + 2 H(+). It carries out the reaction L-proline + NAD(+) = (S)-1-pyrroline-5-carboxylate + NADH + 2 H(+). Its pathway is amino-acid biosynthesis; L-proline biosynthesis; L-proline from L-glutamate 5-semialdehyde: step 1/1. The sequence is that of Pyrroline-5-carboxylate reductase (PROC1) from Arabidopsis thaliana (Mouse-ear cress).